The following is a 574-amino-acid chain: Peptidyl-prolyl cis-trans isomerase FKBP9 (574 aa).

The signal sequence occupies residues 1 to 26 (MAIRARSWRPPPPPLLLLLLWVTGQA). PPIase FKBP-type domains follow at residues 58 to 146 (GDFV…MDIW), 170 to 258 (SDFV…LDLH), 282 to 369 (GDFL…IDFH), and 393 to 481 (GDYL…LELV). Asn178, Asn290, Asn306, and Asn401 each carry an N-linked (GlcNAc...) asparagine glycan. 2 EF-hand domains span residues 492–527 (WNGE…QVAS) and 537–572 (DAEM…TKHD). Ca(2+) contacts are provided by Asp505, Asp507, Asp509, Glu511, Glu516, Asp550, Asn552, Asp554, Lys556, and Glu561. The Prevents secretion from ER motif lies at 571–574 (HDEL).

In terms of processing, phosphorylated.

Its subcellular location is the endoplasmic reticulum. It catalyses the reaction [protein]-peptidylproline (omega=180) = [protein]-peptidylproline (omega=0). Inhibited by FK506. Functionally, PPIases accelerate the folding of proteins during protein synthesis. This is Peptidyl-prolyl cis-trans isomerase FKBP9 (FKBP9) from Bos taurus (Bovine).